A 523-amino-acid polypeptide reads, in one-letter code: F-box only protein 31-B (523 aa).

The region spanning 59–105 is the F-box domain; that stretch reads PRSLLQLPPEILVEIFSSLPGTELPSLAQVCRKFRQILTTDTIWKRR. 4 residues coordinate Zn(2+): Cys201, His209, Cys225, and His231. Residues 372-427 are disordered; that stretch reads IQREQRQTGNEEDDGKGAGPDRAEHSQQPAPVHRPAKEDVNGVDNADDREQKPPNV. Composition is skewed to basic and acidic residues over residues 386–396 and 406–423; these read GKGAGPDRAEH and PAKEDVNGVDNADDREQK.

The protein belongs to the FBXO31 family. As to quaternary structure, part of a SCF (SKP1-cullin-F-box) protein ligase complex SCF(FBXO31).

The protein resides in the cytoplasm. Its pathway is protein modification; protein ubiquitination. Functionally, substrate-recognition component of the SCF(FBXO31) protein ligase complex, which specifically mediates the ubiquitination of proteins amidated at their C-terminus in response to oxidative stress, leading to their degradation by the proteasome. Fbxo31 specifically recognizes and binds C-terminal peptides bearing an amide: C-terminal amidation in response to oxidative stress takes place following protein fragmentation. The SCF(FBXO31) also plays a role in G1 arrest following DNA damage by mediating ubiquitination of phosphorylated cyclin-D1 (ccnd1), promoting its degradation by the proteasome, resulting in G1 arrest. The SCF(FBXO31) complex is however not a major regulator of ccnd1 stability during the G1/S transition. The protein is F-box only protein 31-B (fbxo31-b) of Xenopus laevis (African clawed frog).